A 72-amino-acid polypeptide reads, in one-letter code: Alpha-elapitoxin-Djk2a (72 aa).

Intrachain disulfides connect Cys-3/Cys-21, Cys-14/Cys-42, Cys-27/Cys-31, Cys-46/Cys-57, and Cys-58/Cys-63.

The protein belongs to the three-finger toxin family. Long-chain subfamily. Type II alpha-neurotoxin sub-subfamily. As to expression, expressed by the venom gland.

Its subcellular location is the secreted. Its function is as follows. Binds with high affinity to muscular (alpha-1/CHRNA1) and neuronal (alpha-7/CHRNA7) nicotinic acetylcholine receptor (nAChR) and inhibits acetylcholine from binding to the receptor, thereby impairing neuromuscular and neuronal transmission. The polypeptide is Alpha-elapitoxin-Djk2a (Dendroaspis jamesoni kaimosae (Eastern Jameson's mamba)).